The following is a 425-amino-acid chain: Serine--tRNA ligase (425 aa).

Threonine 231 to glutamate 233 contacts L-serine. Arginine 262–glutamate 264 contributes to the ATP binding site. Glutamate 285 serves as a coordination point for L-serine. Glutamate 349 to serine 352 contributes to the ATP binding site. Serine 385 lines the L-serine pocket.

It belongs to the class-II aminoacyl-tRNA synthetase family. Type-1 seryl-tRNA synthetase subfamily. Homodimer. The tRNA molecule binds across the dimer.

The protein resides in the cytoplasm. The catalysed reaction is tRNA(Ser) + L-serine + ATP = L-seryl-tRNA(Ser) + AMP + diphosphate + H(+). It catalyses the reaction tRNA(Sec) + L-serine + ATP = L-seryl-tRNA(Sec) + AMP + diphosphate + H(+). It participates in aminoacyl-tRNA biosynthesis; selenocysteinyl-tRNA(Sec) biosynthesis; L-seryl-tRNA(Sec) from L-serine and tRNA(Sec): step 1/1. Its function is as follows. Catalyzes the attachment of serine to tRNA(Ser). Is also able to aminoacylate tRNA(Sec) with serine, to form the misacylated tRNA L-seryl-tRNA(Sec), which will be further converted into selenocysteinyl-tRNA(Sec). This is Serine--tRNA ligase from Maricaulis maris (strain MCS10) (Caulobacter maris).